Reading from the N-terminus, the 528-residue chain is Aspartic proteinase-like protein 1 (528 aa).

Positions 1–22 are cleaved as a signal peptide; the sequence is MVSRSAFLLFCVLFLATEETLA. The 350-residue stretch at 100–449 folds into the Peptidase A1 domain; the sequence is HYTWIDIGTP…DRENMKLGWS (350 aa). Residue D118 is part of the active site. N193 and N217 each carry an N-linked (GlcNAc...) asparagine glycan. D333 is a catalytic residue. N-linked (GlcNAc...) asparagine glycosylation is found at N358 and N391. The disordered stretch occupies residues 451–503; it reads SKCQEDKIEPPQASPGSTSSPNPLPTDEQQSRGGHAVSPAIAGKTPSKTPSSS. Residues 464-482 show a composition bias toward polar residues; that stretch reads SPGSTSSPNPLPTDEQQSR. Residues 494 to 503 show a composition bias toward low complexity; that stretch reads KTPSKTPSSS. A lipid anchor (GPI-anchor amidated serine) is attached at S503. The propeptide at 504 to 528 is removed in mature form; the sequence is SSYSFSSIMRLFNSLLLLHWLASLM.

Belongs to the peptidase A1 family.

The protein resides in the cell membrane. This is Aspartic proteinase-like protein 1 from Arabidopsis thaliana (Mouse-ear cress).